The chain runs to 227 residues: uncharacterized protein (227 aa).

5 helical membrane-spanning segments follow: residues 27-47, 63-83, 126-146, 153-173, and 186-206; these read AVLP…FPLL, PAPP…AVLG, TIIL…IAGV, VFLG…TLAG, and FQLI…VSAA.

It belongs to the DedA family.

The protein resides in the cell membrane. This is an uncharacterized protein from Mycobacterium tuberculosis (strain CDC 1551 / Oshkosh).